Consider the following 111-residue polypeptide: Aquaporin-2 (111 aa).

Residues 1–6 (SIAFSR) lie on the Cytoplasmic side of the membrane. Residues 7–27 (AVFSEFLATLLFVFFGLGSAL) traverse the membrane as a helical segment. Over 28 to 37 (NWPSTVPIPT) the chain is Extracellular. The chain crosses the membrane as a helical span at residues 38–56 (VLQISMAFGLAIGTLVQTL). Over 57–61 (GHISG) the chain is Cytoplasmic. An intramembrane region (discontinuously helical) is located at residues 62–71 (AHINPAVTVA). The short motif at 65–67 (NPA) is the NPA 1 element. At 72–82 (CLVGCHVSFLR) the chain is on the cytoplasmic side. The helical transmembrane segment at 83-104 (ATFYVAAQLLGAVAGAALLHKL) threads the bilayer. The Extracellular portion of the chain corresponds to 105–111 (TPEDIRG).

Belongs to the MIP/aquaporin (TC 1.A.8) family. As to quaternary structure, homotetramer. In terms of processing, serine phosphorylation is necessary and sufficient for expression at the apical membrane. Endocytosis is not phosphorylation-dependent. N-glycosylated.

The protein resides in the apical cell membrane. It localises to the basolateral cell membrane. The protein localises to the cell membrane. It is found in the cytoplasmic vesicle membrane. Its subcellular location is the golgi apparatus. The protein resides in the trans-Golgi network membrane. It carries out the reaction H2O(in) = H2O(out). The enzyme catalyses glycerol(in) = glycerol(out). Its function is as follows. Forms a water-specific channel that provides the plasma membranes of renal collecting duct with high permeability to water, thereby permitting water to move in the direction of an osmotic gradient. Plays an essential role in renal water homeostasis. Could also be permeable to glycerol. In Macroscelides proboscideus (Short-eared elephant shrew), this protein is Aquaporin-2.